Reading from the N-terminus, the 619-residue chain is Long-chain fatty acid transport protein 6 (619 aa).

The next 2 helical transmembrane spans lie at 22-42 (LLFPYFWDDFWYLLKVVRYGI) and 119-139 (VHVWFGLAKLGCVVAFLNSNL). 221-232 (YIFTSGTTGLPK) provides a ligand contact to AMP.

This sequence belongs to the ATP-dependent AMP-binding enzyme family.

Its subcellular location is the cell membrane. It localises to the sarcolemma. It carries out the reaction a fatty acid(in) = a fatty acid(out). It catalyses the reaction hexadecanoate(out) = hexadecanoate(in). The enzyme catalyses (9Z,12Z)-octadecadienoate(out) = (9Z,12Z)-octadecadienoate(in). The catalysed reaction is (9Z)-octadecenoate(out) = (9Z)-octadecenoate(in). It carries out the reaction a very long-chain fatty acid + ATP + CoA = a very long-chain fatty acyl-CoA + AMP + diphosphate. It catalyses the reaction tetracosanoate + ATP + CoA = tetracosanoyl-CoA + AMP + diphosphate. The enzyme catalyses a long-chain fatty acid + ATP + CoA = a long-chain fatty acyl-CoA + AMP + diphosphate. The catalysed reaction is (9Z)-octadecenoate + ATP + CoA = (9Z)-octadecenoyl-CoA + AMP + diphosphate. It carries out the reaction (5Z,8Z,11Z,14Z)-eicosatetraenoate + ATP + CoA = (5Z,8Z,11Z,14Z)-eicosatetraenoyl-CoA + AMP + diphosphate. Functionally, mediates the import of long-chain fatty acids (LCFA) into the cell by facilitating their transport at the plasma membrane. Also functions as an acyl-CoA ligase catalyzing the ATP-dependent formation of fatty acyl-CoA using LCFA and very-long-chain fatty acids (VLCFA) as substrates. Plays a pivotal role in regulating available LCFA substrates from exogenous sources in tissues undergoing high levels of beta-oxidation such as the heart. This Mus musculus (Mouse) protein is Long-chain fatty acid transport protein 6 (Slc27a6).